Reading from the N-terminus, the 1033-residue chain is Lethal(2) giant larvae protein homolog SRO7 (1033 aa).

Residues 16–45 (SLKGQNSETPIENSKASFKSKNSKTSTISK) are disordered. Polar residues predominate over residues 18–27 (KGQNSETPIE). The span at 28–45 (NSKASFKSKNSKTSTISK) shows a compositional bias: low complexity. WD repeat units lie at residues 81–114 (IAAAFDFTQNLLAIATVTGEVHIYGQQQVEVVIK), 121–156 (IKEMRFVKGIYLVVINAKDTVYVLSLYSQKVLTTVF), 161–197 (ITSIDTDASLDWMLIGLQNGSMIVYDIDRDQLSSFKL), 216–249 (SIQWNPRDIGTVLISYEYVTLTYSLVENEIKQSF), 274–309 (VIQSLYHPNSLHIITIHEDNSLVFWDANSGHMIMAR), 333–397 (KISK…MKIF), 405–440 (IVNILPIPRQSPYFAGCHNPGLILLILGNGEIETML), 464–538 (ATTS…FEVN), 552–631 (DKIS…STAV), 638–673 (TSAINNSNIGFVGIAYAAGSLMLIDRRGPAIIYMEN), 685–736 (VTCI…DITN), 745–799 (KIDA…THKG), 804–851 (LAAT…MSEH), and 865–888 (SVLRNGDIAIRVSEFQASLFSTVK). A phosphoserine mark is found at Ser591 and Ser602. A disordered region spans residues 953–984 (SFSERSSDDNNANHPEHQYTKPTRKGRNSSYG).

The protein belongs to the WD repeat L(2)GL family. In terms of assembly, interacts with MYO2 and SEC9.

It localises to the cytoplasm. The protein resides in the cell membrane. Functionally, acts as an allosteric regulator of polarized exocytosis by promoting the targeted fusion of vesicles with the plasma membrane. Coordinates the spatial and temporal nature of both Rab-dependent tethering and SNARE-dependent membrane fusion of exocytic vesicles with the plasma membrane. Required for targeting of the sodium pumping ATPase ENA1 to the Cell Surface, thus being involved in maintenance of ion homeostasis in cells exposed to NaCl stress. May be involved in the targeting of the myosin proteins to their intrinsic pathways. Multicopy suppressor of RHO3. May also participate in the maintenance of cell polarity and bud growth. In Saccharomyces cerevisiae (strain ATCC 204508 / S288c) (Baker's yeast), this protein is Lethal(2) giant larvae protein homolog SRO7 (SRO7).